The sequence spans 123 residues: Large ribosomal subunit protein bL12 (123 aa).

Belongs to the bacterial ribosomal protein bL12 family. In terms of assembly, homodimer. Part of the ribosomal stalk of the 50S ribosomal subunit. Forms a multimeric L10(L12)X complex, where L10 forms an elongated spine to which 2 to 4 L12 dimers bind in a sequential fashion. Binds GTP-bound translation factors.

In terms of biological role, forms part of the ribosomal stalk which helps the ribosome interact with GTP-bound translation factors. Is thus essential for accurate translation. This Burkholderia vietnamiensis (strain G4 / LMG 22486) (Burkholderia cepacia (strain R1808)) protein is Large ribosomal subunit protein bL12.